Consider the following 250-residue polypeptide: Ubiquinone/menaquinone biosynthesis C-methyltransferase UbiE (250 aa).

S-adenosyl-L-methionine-binding positions include Thr73, Asp94, and 122–123 (DA).

It belongs to the class I-like SAM-binding methyltransferase superfamily. MenG/UbiE family.

The enzyme catalyses a 2-demethylmenaquinol + S-adenosyl-L-methionine = a menaquinol + S-adenosyl-L-homocysteine + H(+). The catalysed reaction is a 2-methoxy-6-(all-trans-polyprenyl)benzene-1,4-diol + S-adenosyl-L-methionine = a 5-methoxy-2-methyl-3-(all-trans-polyprenyl)benzene-1,4-diol + S-adenosyl-L-homocysteine + H(+). The protein operates within quinol/quinone metabolism; menaquinone biosynthesis; menaquinol from 1,4-dihydroxy-2-naphthoate: step 2/2. It functions in the pathway cofactor biosynthesis; ubiquinone biosynthesis. Functionally, methyltransferase required for the conversion of demethylmenaquinol (DMKH2) to menaquinol (MKH2) and the conversion of 2-polyprenyl-6-methoxy-1,4-benzoquinol (DDMQH2) to 2-polyprenyl-3-methyl-6-methoxy-1,4-benzoquinol (DMQH2). This Coxiella burnetii (strain RSA 493 / Nine Mile phase I) protein is Ubiquinone/menaquinone biosynthesis C-methyltransferase UbiE.